The following is a 290-amino-acid chain: MSKMAQKWDAYYRLMRLDRPIGTMLLLWPCLMALLLAADGMPDLRVLIIFIIGVVVMRACGCIINDYADRKLDSHVARTRSRPLASGEVTVAEALTLFVVLGLFAFSLVLLLNPLVVQLSVVGIILTIIYPFTKRWTNMPQMFLGVVWSWSIPMAYAAQTGEVPASAWWLFAANWCWTVAYDTMYAMVDRDDDLKVGIKSTAILFGRFDREIIGAFQLAALGCFIAAGWSGDRGLLYGLGVLTFVGFSAYQQRLIYGRERGDCFKAFLNNNWAGLSLFLALGADYAFAAL.

8 consecutive transmembrane segments (helical) span residues 21–41 (IGTM…ADGM), 44–64 (LRVL…GCII), 97–117 (LFVV…PLVV), 143–163 (FLGV…TGEV), 168–188 (WWLF…YAMV), 211–231 (EIIG…GWSG), 235–255 (LLYG…QRLI), and 270–290 (NNWA…FAAL).

It belongs to the UbiA prenyltransferase family. The cofactor is Mg(2+).

It is found in the cell inner membrane. The enzyme catalyses all-trans-octaprenyl diphosphate + 4-hydroxybenzoate = 4-hydroxy-3-(all-trans-octaprenyl)benzoate + diphosphate. It functions in the pathway cofactor biosynthesis; ubiquinone biosynthesis. In terms of biological role, catalyzes the prenylation of para-hydroxybenzoate (PHB) with an all-trans polyprenyl group. Mediates the second step in the final reaction sequence of ubiquinone-8 (UQ-8) biosynthesis, which is the condensation of the polyisoprenoid side chain with PHB, generating the first membrane-bound Q intermediate 3-octaprenyl-4-hydroxybenzoate. This Shewanella amazonensis (strain ATCC BAA-1098 / SB2B) protein is 4-hydroxybenzoate octaprenyltransferase.